The chain runs to 197 residues: Anthranilate synthase component 2 (197 aa).

A Glutamine amidotransferase type-1 domain is found at 5 to 197; that stretch reads KVLVIDNIDS…LIKNFVESEY (193 aa). 55–57 is a binding site for L-glutamine; sequence GPK. C80 functions as the Nucleophile; for GATase activity in the catalytic mechanism. L-glutamine contacts are provided by residues Q84 and 130 to 131; that span reads SL. Catalysis depends on for GATase activity residues H168 and E170.

In terms of assembly, heterotetramer consisting of two non-identical subunits: a beta subunit (TrpG) and a large alpha subunit (TrpE).

It carries out the reaction chorismate + L-glutamine = anthranilate + pyruvate + L-glutamate + H(+). It participates in amino-acid biosynthesis; L-tryptophan biosynthesis; L-tryptophan from chorismate: step 1/5. In terms of biological role, part of a heterotetrameric complex that catalyzes the two-step biosynthesis of anthranilate, an intermediate in the biosynthesis of L-tryptophan. In the first step, the glutamine-binding beta subunit (TrpG) of anthranilate synthase (AS) provides the glutamine amidotransferase activity which generates ammonia as a substrate that, along with chorismate, is used in the second step, catalyzed by the large alpha subunit of AS (TrpE) to produce anthranilate. In the absence of TrpG, TrpE can synthesize anthranilate directly from chorismate and high concentrations of ammonia. The protein is Anthranilate synthase component 2 (trpG) of Methanocaldococcus jannaschii (strain ATCC 43067 / DSM 2661 / JAL-1 / JCM 10045 / NBRC 100440) (Methanococcus jannaschii).